Consider the following 577-residue polypeptide: General transcription factor IIF subunit 1 (577 aa).

A disordered region spans residues 1–36; it reads MSSASKSTPSAASGSSTSAAAAAAASVASGSASSSA. A phosphoserine mark is found at Ser183, Ser246, Ser250, and Ser252. Positions 236 to 508 are disordered; that stretch reads KITDMDEWID…TSLPTSFSGG (273 aa). Positions 240–256 are enriched in acidic residues; it reads MDEWIDSEDESDSEDEE. The segment covering 257 to 271 has biased composition (basic and acidic residues); the sequence is DKKKKEQEDSDDGKA. Basic residues predominate over residues 272-285; it reads KGKGKKGADKKKKK. Positions 289–304 are enriched in acidic residues; the sequence is DDEAFEESDDGDEEGR. The segment covering 319 to 341 has biased composition (basic and acidic residues); it reads PEAKVDKDMKGVAEEDALRKLLT. Thr341 carries the phosphothreonine modification. Phosphoserine occurs at positions 342, 352, and 355. Residues 362–376 are compositionally biased toward basic and acidic residues; it reads GEKKKKDKGKDEVSK. Residues 392 to 406 show a composition bias toward low complexity; that stretch reads SNGSGDSSTDFSSDS. A compositionally biased stretch (basic and acidic residues) spans 423 to 437; it reads VVKDKDKEKEKEKES. The segment covering 438–456 has biased composition (low complexity); the sequence is AASSKVIASSSNANKSRSA. Residues Ser453 and Ser455 each carry the phosphoserine modification. Position 457 is a phosphothreonine (Thr457). 2 stretches are compositionally biased toward polar residues: residues 471-489 and 496-506; these read SLPS…TSTP and EISTSLPTSFS. Ser482 and Ser484 each carry phosphoserine. Residue Thr488 is modified to Phosphothreonine.

The protein belongs to the TFIIF alpha subunit family. As to quaternary structure, heterodimer of an alpha and a beta subunit. Phosphorylated on Ser and other residues by TAF1 and casein kinase II-like kinases.

Its subcellular location is the nucleus. TFIIF is a general transcription initiation factor that binds to RNA polymerase II and helps to recruit it to the initiation complex in collaboration with TFIIB. It promotes transcription elongation. The sequence is that of General transcription factor IIF subunit 1 from Drosophila melanogaster (Fruit fly).